Consider the following 462-residue polypeptide: Glycine--tRNA ligase (462 aa).

Substrate-binding residues include R98 and E174. ATP contacts are provided by residues 206-208 (RNE), 216-221 (FRTREF), 290-291 (EL), and 334-337 (GADR). 221–225 (FEQME) provides a ligand contact to substrate. 330-334 (EPSLG) is a binding site for substrate.

It belongs to the class-II aminoacyl-tRNA synthetase family. As to quaternary structure, homodimer.

It is found in the cytoplasm. It carries out the reaction tRNA(Gly) + glycine + ATP = glycyl-tRNA(Gly) + AMP + diphosphate. Its function is as follows. Catalyzes the attachment of glycine to tRNA(Gly). This is Glycine--tRNA ligase from Lachnospira eligens (strain ATCC 27750 / DSM 3376 / VPI C15-48 / C15-B4) (Eubacterium eligens).